We begin with the raw amino-acid sequence, 254 residues long: MPSNMNNKLDPVFSSGFVRREFNDSGIADGKLRTISTSSCATTMSSESYRISLGVGPLWWSDVPVHHRTDHDRASLLTGYSRKSSVDSAGGSLYEASSRASSLSSSQSDCSDLESQPDIHSLCSDDDCQEVLRQILQHDQPVQITIKLHVTEDQYTNWNTILNPVNNLLYVALPKDLPPAGSKQTFISLLEFAEEKLEVDGIVMVMPKDQPDRARLIEAFLFMGFEPLSRKAPQAPPAAINDNENYYFLYSIEE.

Belongs to the ODC antizyme family. In terms of assembly, interacts with ODC1 and thereby sterically blocks ODC homodimerization.

Its function is as follows. Ornithine decarboxylase (ODC) antizyme protein that negatively regulates ODC activity and intracellular polyamine biosynthesis and uptake in response to increased intracellular polyamine levels. Binds to ODC monomers, inhibiting the assembly of the functional ODC homodimer, and targets the monomers for ubiquitin-independent proteolytic destruction by the 26S proteasome. Required for cellular differentiation in neuronal and myogenic lineages during embryonic development. This chain is Ornithine decarboxylase antizyme (Oda), found in Drosophila melanogaster (Fruit fly).